Here is a 404-residue protein sequence, read N- to C-terminus: MKRTVIMMLDSFGVGAAGDAAKFGDVGSDTFGHIAKACAEGKADTGRKGPLALPNLARLGLAHAAMESTGAFAPGFADNVDLIGAYGHAQELSSGKDTPSGHWEMAGVPVLFEWGYFSEHQNSFPKELTDKILARAGLDGFLGNCHASGTTILEELGEEHMRSGKPIFYTSADSVFQIACHEGTFGLENLYRLCEIAREELEPYNIGRVIARPFDGTGPSDFARTGNRKDYSLEPPAKTVLDKLKAAGGEVVSVGKIADIYAYCGITKKVKANGLEALFDATLAEVKSAGENTIVFTNFVDFDSHYGHRRDVAGYAKGLEYFDARLPEMLALLDEDDLLILTADHGCDPTWQGTDHTREYVPVLAYGAGLKAGSLGRRNSFADIGQSIASYFKLEPMEYGESFI.

Residues aspartate 10, aspartate 303, histidine 308, aspartate 344, histidine 345, and histidine 356 each coordinate Mn(2+).

Belongs to the phosphopentomutase family. Mn(2+) is required as a cofactor.

It is found in the cytoplasm. It catalyses the reaction 2-deoxy-alpha-D-ribose 1-phosphate = 2-deoxy-D-ribose 5-phosphate. The enzyme catalyses alpha-D-ribose 1-phosphate = D-ribose 5-phosphate. Its pathway is carbohydrate degradation; 2-deoxy-D-ribose 1-phosphate degradation; D-glyceraldehyde 3-phosphate and acetaldehyde from 2-deoxy-alpha-D-ribose 1-phosphate: step 1/2. In terms of biological role, isomerase that catalyzes the conversion of deoxy-ribose 1-phosphate (dRib-1-P) and ribose 1-phosphate (Rib-1-P) to deoxy-ribose 5-phosphate (dRib-5-P) and ribose 5-phosphate (Rib-5-P), respectively. In Shewanella oneidensis (strain ATCC 700550 / JCM 31522 / CIP 106686 / LMG 19005 / NCIMB 14063 / MR-1), this protein is Phosphopentomutase.